The following is a 225-amino-acid chain: Chromosome partition protein MukE (225 aa).

The disordered stretch occupies residues 197 to 225 (RDGEAMPIENHLQLNDETEENQPDSGEEE). Acidic residues predominate over residues 212–225 (DETEENQPDSGEEE).

The protein belongs to the MukE family. As to quaternary structure, interacts, and probably forms a ternary complex, with MukF and MukB. The complex formation is stimulated by calcium or magnesium.

The protein resides in the cytoplasm. It localises to the nucleoid. Its function is as follows. Involved in chromosome condensation, segregation and cell cycle progression. May participate in facilitating chromosome segregation by condensation DNA from both sides of a centrally located replisome during cell division. Probably acts via its interaction with MukB and MukF. The protein is Chromosome partition protein MukE of Escherichia coli O157:H7.